The chain runs to 227 residues: Fibrillarin-like rRNA/tRNA 2'-O-methyltransferase (227 aa).

S-adenosyl-L-methionine is bound by residues 86 to 87 (TT), 105 to 106 (EF), 130 to 131 (DA), and 150 to 153 (DVAQ).

This sequence belongs to the methyltransferase superfamily. Fibrillarin family. Interacts with nop5. Component of box C/D small ribonucleoprotein (sRNP) particles that contain rpl7ae, FlpA and nop5, plus a guide RNA.

In terms of biological role, involved in pre-rRNA and tRNA processing. Utilizes the methyl donor S-adenosyl-L-methionine to catalyze the site-specific 2'-hydroxyl methylation of ribose moieties in rRNA and tRNA. Site specificity is provided by a guide RNA that base pairs with the substrate. Methylation occurs at a characteristic distance from the sequence involved in base pairing with the guide RNA. This Pyrococcus horikoshii (strain ATCC 700860 / DSM 12428 / JCM 9974 / NBRC 100139 / OT-3) protein is Fibrillarin-like rRNA/tRNA 2'-O-methyltransferase.